The chain runs to 345 residues: Fe(3+) ions import ATP-binding protein FbpC (345 aa).

An ABC transporter domain is found at 3-233 (LSLKAATVRF…PADEFVARFL (231 aa)). Residue 35–42 (GPSGSGKS) coordinates ATP.

Belongs to the ABC transporter superfamily. Fe(3+) ion importer (TC 3.A.1.10) family. In terms of assembly, the complex is composed of two ATP-binding proteins (FbpC), two transmembrane proteins (FbpB) and a solute-binding protein (FbpA).

It localises to the cell membrane. It carries out the reaction Fe(3+)(out) + ATP + H2O = Fe(3+)(in) + ADP + phosphate + H(+). Its function is as follows. Part of the ABC transporter complex FbpABC involved in Fe(3+) ions import. Responsible for energy coupling to the transport system. This is Fe(3+) ions import ATP-binding protein FbpC from Streptomyces avermitilis (strain ATCC 31267 / DSM 46492 / JCM 5070 / NBRC 14893 / NCIMB 12804 / NRRL 8165 / MA-4680).